The following is a 466-amino-acid chain: Cytochrome b561 and DOMON domain-containing protein At3g59070 (466 aa).

The N-terminal stretch at Met1–Ala25 is a signal peptide. A DOMON domain is found at Leu57 to Gly172. In terms of domain architecture, Cytochrome b561 spans Arg179 to Trp380. Helical transmembrane passes span Ile219 to Ala239, Trp252 to Leu272, and Thr287 to Leu307. Residues His220, His256, His289, and His325 each contribute to the heme b site. 2 helical membrane-spanning segments follow: residues Thr327–Leu347 and Ile355–Gln375.

It depends on heme b as a cofactor.

The protein localises to the membrane. Functionally, may act as a catecholamine-responsive trans-membrane electron transporter. This is Cytochrome b561 and DOMON domain-containing protein At3g59070 from Arabidopsis thaliana (Mouse-ear cress).